Reading from the N-terminus, the 190-residue chain is Vascular endothelial growth factor A (190 aa).

Positions 1-26 (MNFLLSWVHWSLALLLYLHHAKWSQA) are cleaved as a signal peptide. 3 cysteine pairs are disulfide-bonded: cysteine 51–cysteine 93, cysteine 82–cysteine 127, and cysteine 86–cysteine 129. N-linked (GlcNAc...) asparagine glycosylation is present at asparagine 100.

It belongs to the PDGF/VEGF growth factor family. As to quaternary structure, homodimer; disulfide-linked. Also found as heterodimer with PGF. Interacts with NRP1. Interacts with BSG. Interacts with CD82; this interaction inhibits VEGFA-mediated signaling pathway.

The protein localises to the secreted. Its function is as follows. Growth factor active in angiogenesis, vasculogenesis and endothelial cell growth. Induces endothelial cell proliferation, promotes cell migration, inhibits apoptosis and induces permeabilization of blood vessels. Binds to the FLT1/VEGFR1 and KDR/VEGFR2 receptors, heparan sulfate and heparin. Binding to NRP1 receptor initiates a signaling pathway needed for motor neuron axon guidance and cell body migration, including for the caudal migration of facial motor neurons from rhombomere 4 to rhombomere 6 during embryonic development. Also binds the DEAR/FBXW7-AS1 receptor. The polypeptide is Vascular endothelial growth factor A (VEGFA) (Sus scrofa (Pig)).